The primary structure comprises 154 residues: Aspartate carbamoyltransferase regulatory chain (154 aa).

Residues Cys111, Cys116, Cys139, and Cys142 each contribute to the Zn(2+) site.

It belongs to the PyrI family. Contains catalytic and regulatory chains. Requires Zn(2+) as cofactor.

Functionally, involved in allosteric regulation of aspartate carbamoyltransferase. In Parabacteroides distasonis (strain ATCC 8503 / DSM 20701 / CIP 104284 / JCM 5825 / NCTC 11152), this protein is Aspartate carbamoyltransferase regulatory chain.